The primary structure comprises 258 residues: Elongation factor Ts (258 aa).

The interval 81-84 (TDFV) is involved in Mg(2+) ion dislocation from EF-Tu. A disordered region spans residues 216–258 (GLKPAEAPKVEETPPAPPEEPAPEPAPAAESKPAKKGSAKKKK). A compositionally biased stretch (pro residues) spans 229 to 241 (PPAPPEEPAPEPA). Residues 249-258 (AKKGSAKKKK) show a composition bias toward basic residues.

It belongs to the EF-Ts family.

It is found in the cytoplasm. Its function is as follows. Associates with the EF-Tu.GDP complex and induces the exchange of GDP to GTP. It remains bound to the aminoacyl-tRNA.EF-Tu.GTP complex up to the GTP hydrolysis stage on the ribosome. The sequence is that of Elongation factor Ts from Synechococcus sp. (strain JA-2-3B'a(2-13)) (Cyanobacteria bacterium Yellowstone B-Prime).